A 909-amino-acid polypeptide reads, in one-letter code: Phosphoenolpyruvate carboxylase (909 aa).

Catalysis depends on residues His-138 and Lys-572.

This sequence belongs to the PEPCase type 1 family. Requires Mg(2+) as cofactor.

The catalysed reaction is oxaloacetate + phosphate = phosphoenolpyruvate + hydrogencarbonate. Functionally, forms oxaloacetate, a four-carbon dicarboxylic acid source for the tricarboxylic acid cycle. This Lactobacillus delbrueckii subsp. bulgaricus (strain ATCC 11842 / DSM 20081 / BCRC 10696 / JCM 1002 / NBRC 13953 / NCIMB 11778 / NCTC 12712 / WDCM 00102 / Lb 14) protein is Phosphoenolpyruvate carboxylase.